The sequence spans 204 residues: Dephospho-CoA kinase (204 aa).

Positions 3 to 200 constitute a DPCK domain; that stretch reads VVAITGGIGS…ETYMAFASQQ (198 aa). ATP is bound at residue 11–16; the sequence is GSGKTT.

The protein belongs to the CoaE family.

The protein resides in the cytoplasm. It carries out the reaction 3'-dephospho-CoA + ATP = ADP + CoA + H(+). The protein operates within cofactor biosynthesis; coenzyme A biosynthesis; CoA from (R)-pantothenate: step 5/5. In terms of biological role, catalyzes the phosphorylation of the 3'-hydroxyl group of dephosphocoenzyme A to form coenzyme A. The protein is Dephospho-CoA kinase of Aeromonas hydrophila.